A 331-amino-acid chain; its full sequence is Ketol-acid reductoisomerase (NADP(+)) (331 aa).

A KARI N-terminal Rossmann domain is found at 2-181; it reads IKKYYESDAD…GATRAVVFET (180 aa). Residues 25-28, Arg48, Ser52, and 82-85 contribute to the NADP(+) site; these read YGSQ and DESQ. His107 is a catalytic residue. Gly133 contributes to the NADP(+) binding site. A KARI C-terminal knotted domain is found at 182–327; that stretch reads TFREETETDL…AEIRGLMPQF (146 aa). Mg(2+) contacts are provided by Asp190, Glu194, Glu226, and Glu230. Substrate is bound at residue Ser251.

It belongs to the ketol-acid reductoisomerase family. The cofactor is Mg(2+).

The catalysed reaction is (2R)-2,3-dihydroxy-3-methylbutanoate + NADP(+) = (2S)-2-acetolactate + NADPH + H(+). The enzyme catalyses (2R,3R)-2,3-dihydroxy-3-methylpentanoate + NADP(+) = (S)-2-ethyl-2-hydroxy-3-oxobutanoate + NADPH + H(+). The protein operates within amino-acid biosynthesis; L-isoleucine biosynthesis; L-isoleucine from 2-oxobutanoate: step 2/4. It functions in the pathway amino-acid biosynthesis; L-valine biosynthesis; L-valine from pyruvate: step 2/4. In terms of biological role, involved in the biosynthesis of branched-chain amino acids (BCAA). Catalyzes an alkyl-migration followed by a ketol-acid reduction of (S)-2-acetolactate (S2AL) to yield (R)-2,3-dihydroxy-isovalerate. In the isomerase reaction, S2AL is rearranged via a Mg-dependent methyl migration to produce 3-hydroxy-3-methyl-2-ketobutyrate (HMKB). In the reductase reaction, this 2-ketoacid undergoes a metal-dependent reduction by NADPH to yield (R)-2,3-dihydroxy-isovalerate. This chain is Ketol-acid reductoisomerase (NADP(+)), found in Methanosphaerula palustris (strain ATCC BAA-1556 / DSM 19958 / E1-9c).